A 236-amino-acid chain; its full sequence is Small ribosomal subunit protein uS2c (236 aa).

It belongs to the universal ribosomal protein uS2 family.

The protein localises to the plastid. It is found in the chloroplast. In Aethionema grandiflorum (Persian stone-cress), this protein is Small ribosomal subunit protein uS2c (rps2).